A 121-amino-acid polypeptide reads, in one-letter code: Large ribosomal subunit protein bL12 (121 aa).

This sequence belongs to the bacterial ribosomal protein bL12 family. Homodimer. Part of the ribosomal stalk of the 50S ribosomal subunit. Forms a multimeric L10(L12)X complex, where L10 forms an elongated spine to which 2 to 4 L12 dimers bind in a sequential fashion. Binds GTP-bound translation factors.

Functionally, forms part of the ribosomal stalk which helps the ribosome interact with GTP-bound translation factors. Is thus essential for accurate translation. The polypeptide is Large ribosomal subunit protein bL12 (Bacillus pumilus (strain SAFR-032)).